A 146-amino-acid chain; its full sequence is Late protein H7 (146 aa).

Residues 10-32 traverse the membrane as a helical segment; sequence LAMTAFFGELNTLDIMALIMSIF.

It belongs to the chordopoxvirinae H7 family.

The protein resides in the membrane. In terms of biological role, contributes to the formation of crescents and immature virions (IV). The chain is Late protein H7 from Vaccinia virus (strain Tian Tan) (VACV).